The primary structure comprises 548 residues: Probable malate:quinone oxidoreductase (548 aa).

The segment at 521 to 548 (DKPQAADSTPKPQLKPQPVQKEVADIAL) is disordered. Residues 530–541 (PKPQLKPQPVQK) show a composition bias toward low complexity.

It belongs to the MQO family. FAD is required as a cofactor.

The catalysed reaction is (S)-malate + a quinone = a quinol + oxaloacetate. The protein operates within carbohydrate metabolism; tricarboxylic acid cycle; oxaloacetate from (S)-malate (quinone route): step 1/1. This Escherichia coli O139:H28 (strain E24377A / ETEC) protein is Probable malate:quinone oxidoreductase.